The chain runs to 336 residues: Probable carboxylesterase 6 (336 aa).

Residues 1–20 (MGGTKLTHVTTTNPNNSNIH) are disordered. Over residues 7–19 (THVTTTNPNNSNI) the composition is skewed to polar residues. The Involved in the stabilization of the negatively charged intermediate by the formation of the oxyanion hole signature appears at 96–98 (HGG). Catalysis depends on residues serine 176, aspartate 276, and histidine 303.

It belongs to the 'GDXG' lipolytic enzyme family. In terms of tissue distribution, expressed in roots, leaves, flowers and siliques.

It carries out the reaction a carboxylic ester + H2O = an alcohol + a carboxylate + H(+). In terms of biological role, carboxylesterase acting on esters with varying acyl chain length. This is Probable carboxylesterase 6 (CXE6) from Arabidopsis thaliana (Mouse-ear cress).